We begin with the raw amino-acid sequence, 175 residues long: Pathogenesis-related protein 1A1 (175 aa).

Residues 1–21 form the signal peptide; sequence MKSSIFVACFITFIIFHSSQA. One can recognise an SCP domain in the interval 29–146; it reads LNAHNAARRR…SGWVFITCNY (118 aa). 3 disulfides stabilise this stretch: Cys65/Cys135, Cys108/Cys114, and Cys130/Cys144.

It belongs to the CRISP family.

Probably involved in the defense reaction of plants against pathogens. This is Pathogenesis-related protein 1A1 from Solanum lycopersicum (Tomato).